The chain runs to 95 residues: Co-chaperonin GroES (95 aa).

This sequence belongs to the GroES chaperonin family. Heptamer of 7 subunits arranged in a ring. Interacts with the chaperonin GroEL.

It is found in the cytoplasm. Functionally, together with the chaperonin GroEL, plays an essential role in assisting protein folding. The GroEL-GroES system forms a nano-cage that allows encapsulation of the non-native substrate proteins and provides a physical environment optimized to promote and accelerate protein folding. GroES binds to the apical surface of the GroEL ring, thereby capping the opening of the GroEL channel. This Bordetella avium (strain 197N) protein is Co-chaperonin GroES.